An 802-amino-acid chain; its full sequence is Osmosensitive cation channel TMEM63C (802 aa).

Topologically, residues 1 to 35 (MSAFPDSMDQKFHNMTVNECFQSRSTVLQGQPFGG) are extracellular. A helical membrane pass occupies residues 36–60 (IPTVLVLNIILWVFVVLLYSFLRKA). Over 61–124 (AWDYGRLALL…RDRDLINKCG (64 aa)) the chain is Cytoplasmic. Residues serine 75 and serine 78 each carry the phosphoserine modification. Residues 125–157 (DDARIYITFQYHLIIFVLILCIPSLGIILPVNY) form a helical membrane-spanning segment. The Extracellular segment spans residues 158–180 (IGTVLDWNSHFGRTTIVNVSTES). The chain crosses the membrane as a helical span at residues 181–205 (KFLWLHSLFAFLYFLINLAFMGHHC). Residues 206–401 (LGFVPKKSLH…IIWKHLSIRR (196 aa)) lie on the Cytoplasmic side of the membrane. The chain crosses the membrane as a helical span at residues 402-431 (FSWWTRFIAINTFLFFLFFFLTTPAIIINT). The Extracellular segment spans residues 432–446 (IDIYNVTRPIEKLQS). A helical transmembrane segment spans residues 447 to 476 (PIVTQFFPSVLLWAFTVTMPLLVYLSAFLE). Residues 477-480 (AHWT) are Cytoplasmic-facing. A helical transmembrane segment spans residues 481-517 (RSSQNLIIVHKCYIFLVFMVVILPSMGLTSLHVFLRW). Over 518 to 540 (LFDIYYLEHATIRFQCVFLPDNG) the chain is Extracellular. A helical membrane pass occupies residues 541–573 (AFFINYVITAALLGTGMELMRLGSLCTYCTRLF). Topologically, residues 574 to 593 (LSKSEPERVHIRKNQATDFQ) are cytoplasmic. Residues 594-612 (FGREYAWMLNVFSVVMAYS) form a helical membrane-spanning segment. The Extracellular segment spans residues 613-615 (ITC). Residues 616-640 (PIIVPFGLLYLCMKHITDRYNMYYS) traverse the membrane as a helical segment. The Cytoplasmic portion of the chain corresponds to 641-647 (YAPTKLN). A helical transmembrane segment spans residues 648 to 676 (AQIHMAAVYQAIFAPLLGLFWMLFFSILR). Topologically, residues 677–681 (VGSLH) are extracellular. The helical transmembrane segment at 682 to 702 (SITLFSMSSLIISVVIAFSGV) threads the bilayer. At 703 to 802 (FLGKLRIAQR…EGLEMEGQSH (100 aa)) the chain is on the cytoplasmic side. Residues 753–785 (TPASSPARHTYGTINSQPEEGEEESGLRGFARE) form a disordered region.

It belongs to the CSC1 (TC 1.A.17) family. Monomer.

The protein localises to the endoplasmic reticulum membrane. The protein resides in the cell membrane. The enzyme catalyses Ca(2+)(in) = Ca(2+)(out). Acts as an osmosensitive cation channel preferentially activated upon hypotonic stress. In contrast to TMEM63B, does not show phospholipid scramblase activity. Enriched in mitochondria-ER contact sites where it may regulate the metabolite flux and organelles' morphologies in response to osmotic changes. In particular may regulate mitochondrial motility and function in motor neuron axons. Required for the functional integrity of the kidney glomerular filtration barrier. The protein is Osmosensitive cation channel TMEM63C of Mus musculus (Mouse).